The following is a 598-amino-acid chain: Arginine--tRNA ligase (598 aa).

A 'HIGH' region motif is present at residues 140-150; sequence ANPTGPLHVGH.

Belongs to the class-I aminoacyl-tRNA synthetase family. Monomer.

The protein resides in the cytoplasm. The enzyme catalyses tRNA(Arg) + L-arginine + ATP = L-arginyl-tRNA(Arg) + AMP + diphosphate. The protein is Arginine--tRNA ligase of Synechococcus sp. (strain JA-3-3Ab) (Cyanobacteria bacterium Yellowstone A-Prime).